Reading from the N-terminus, the 39-residue chain is Photosystem II reaction center protein X (39 aa).

A helical membrane pass occupies residues 11–31 (SLLWGAIVVVIPLSAALLFIS).

The protein belongs to the PsbX family. Type 1 subfamily. In terms of assembly, PSII is composed of 1 copy each of membrane proteins PsbA, PsbB, PsbC, PsbD, PsbE, PsbF, PsbH, PsbI, PsbJ, PsbK, PsbL, PsbM, PsbT, PsbX, PsbY, PsbZ, Psb30/Ycf12, at least 3 peripheral proteins of the oxygen-evolving complex and a large number of cofactors. It forms dimeric complexes.

It localises to the plastid. Its subcellular location is the cyanelle thylakoid membrane. Involved in the binding and/or turnover of quinones at the Q(B) site of photosystem II (PSII). PSII is a light-driven water plastoquinone oxidoreductase, using light energy to abstract electrons from H(2)O, generating a proton gradient subsequently used for ATP formation. This Cyanophora paradoxa protein is Photosystem II reaction center protein X.